Reading from the N-terminus, the 579-residue chain is General transcription and DNA repair factor IIH subunit TFB1-3 (579 aa).

2 BSD domains span residues 107 to 161 and 186 to 238; these read LTPA…GKDS and RTNR…YLYS.

It belongs to the TFB1 family. Component of the 7-subunit TFIIH core complex composed of XPB, XPD, TFB1/GTF2H1, GTF2H2/P44, TFB4/GTF2H3, TFB2/GTF2H4 and TFB5/GTF2H5, which is active in NER. The core complex associates with the 3-subunit CDK-activating kinase (CAK) module composed of CYCH1/cyclin H1, CDKD and MAT1/At4g30820 to form the 10-subunit holoenzyme (holo-TFIIH) active in transcription.

Its subcellular location is the nucleus. Its function is as follows. Component of the general transcription and DNA repair factor IIH (TFIIH) core complex, which is involved in general and transcription-coupled nucleotide excision repair (NER) of damaged DNA and, when complexed to CAK, in RNA transcription by RNA polymerase II. In NER, TFIIH acts by opening DNA around the lesion to allow the excision of the damaged oligonucleotide and its replacement by a new DNA fragment. In transcription, TFIIH has an essential role in transcription initiation. When the pre-initiation complex (PIC) has been established, TFIIH is required for promoter opening and promoter escape. Phosphorylation of the C-terminal tail (CTD) of the largest subunit of RNA polymerase II by the kinase module CAK controls the initiation of transcription. The polypeptide is General transcription and DNA repair factor IIH subunit TFB1-3 (Arabidopsis thaliana (Mouse-ear cress)).